Here is a 483-residue protein sequence, read N- to C-terminus: Regulatory protein ViaA (483 aa).

This sequence belongs to the ViaA family. Homodimer. Interacts with RavA.

The protein resides in the cytoplasm. Functionally, component of the RavA-ViaA chaperone complex, which may act on the membrane to optimize the function of some of the respiratory chains. ViaA stimulates the ATPase activity of RavA. This chain is Regulatory protein ViaA, found in Escherichia coli O1:K1 / APEC.